The following is a 122-amino-acid chain: Large ribosomal subunit protein bL12 (122 aa).

Belongs to the bacterial ribosomal protein bL12 family. As to quaternary structure, homodimer. Part of the ribosomal stalk of the 50S ribosomal subunit. Forms a multimeric L10(L12)X complex, where L10 forms an elongated spine to which 2 to 4 L12 dimers bind in a sequential fashion. Binds GTP-bound translation factors.

Its function is as follows. Forms part of the ribosomal stalk which helps the ribosome interact with GTP-bound translation factors. Is thus essential for accurate translation. The chain is Large ribosomal subunit protein bL12 from Borrelia hermsii (strain HS1 / DAH).